The primary structure comprises 984 residues: DNA polymerase (984 aa).

The bipartite nuclear localization signal stretch occupies residues 804 to 827 (DNPGKKRKSTDDNEGPSPKRRVIT). The interval 939–948 (CSVKRKRDDD) is monopartite nuclear localization signal. The interval 943–969 (RKRDDDDDNDDDDDDDCDSSDSENDTQ) is disordered. Residues 947 to 966 (DDDDNDDDDDDDCDSSDSEN) are compositionally biased toward acidic residues.

It belongs to the DNA polymerase type-B family.

It localises to the host nucleus. It catalyses the reaction DNA(n) + a 2'-deoxyribonucleoside 5'-triphosphate = DNA(n+1) + diphosphate. In terms of biological role, replicates the viral genome, host DNA polymerases cannot substitute for the viral enzyme in this process. The sequence is that of DNA polymerase (POL) from Autographa californica nuclear polyhedrosis virus (AcMNPV).